The chain runs to 632 residues: 1-deoxy-D-xylulose-5-phosphate synthase (632 aa).

Residues His87 and 128–130 (GHS) each bind thiamine diphosphate. Asp159 contacts Mg(2+). Thiamine diphosphate-binding positions include 160-161 (GA), Asn188, Phe295, and Glu377. Mg(2+) is bound at residue Asn188.

The protein belongs to the transketolase family. DXPS subfamily. In terms of assembly, homodimer. The cofactor is Mg(2+). It depends on thiamine diphosphate as a cofactor.

The enzyme catalyses D-glyceraldehyde 3-phosphate + pyruvate + H(+) = 1-deoxy-D-xylulose 5-phosphate + CO2. Its pathway is metabolic intermediate biosynthesis; 1-deoxy-D-xylulose 5-phosphate biosynthesis; 1-deoxy-D-xylulose 5-phosphate from D-glyceraldehyde 3-phosphate and pyruvate: step 1/1. In terms of biological role, catalyzes the acyloin condensation reaction between C atoms 2 and 3 of pyruvate and glyceraldehyde 3-phosphate to yield 1-deoxy-D-xylulose-5-phosphate (DXP). The polypeptide is 1-deoxy-D-xylulose-5-phosphate synthase (Stutzerimonas stutzeri (strain A1501) (Pseudomonas stutzeri)).